The primary structure comprises 231 residues: ATP phosphoribosyltransferase (231 aa).

It belongs to the ATP phosphoribosyltransferase family. Short subfamily. Heteromultimer composed of HisG and HisZ subunits.

The protein localises to the cytoplasm. It catalyses the reaction 1-(5-phospho-beta-D-ribosyl)-ATP + diphosphate = 5-phospho-alpha-D-ribose 1-diphosphate + ATP. Its pathway is amino-acid biosynthesis; L-histidine biosynthesis; L-histidine from 5-phospho-alpha-D-ribose 1-diphosphate: step 1/9. In terms of biological role, catalyzes the condensation of ATP and 5-phosphoribose 1-diphosphate to form N'-(5'-phosphoribosyl)-ATP (PR-ATP). Has a crucial role in the pathway because the rate of histidine biosynthesis seems to be controlled primarily by regulation of HisG enzymatic activity. The protein is ATP phosphoribosyltransferase (hisG) of Rhizobium meliloti (strain 1021) (Ensifer meliloti).